Here is a 246-residue protein sequence, read N- to C-terminus: Zinc import ATP-binding protein ZnuC (246 aa).

The ABC transporter domain maps to 24-243 (LKIENLALAY…RTLNEIFSSY (220 aa)). 56-63 (GPNGGGKT) lines the ATP pocket.

This sequence belongs to the ABC transporter superfamily. Zinc importer (TC 3.A.1.15.5) family. As to quaternary structure, the complex is composed of two ATP-binding proteins (ZnuC), two transmembrane proteins (ZnuB) and a solute-binding protein (ZnuA).

It localises to the cell membrane. The enzyme catalyses Zn(2+)(out) + ATP(in) + H2O(in) = Zn(2+)(in) + ADP(in) + phosphate(in) + H(+)(in). Its function is as follows. Part of the ABC transporter complex ZnuABC involved in zinc import. Responsible for energy coupling to the transport system. The protein is Zinc import ATP-binding protein ZnuC of Wolbachia pipientis wMel.